Reading from the N-terminus, the 368-residue chain is Peptide chain release factor 2 (368 aa).

Residue Q249 is modified to N5-methylglutamine.

This sequence belongs to the prokaryotic/mitochondrial release factor family. Methylated by PrmC. Methylation increases the termination efficiency of RF2.

It localises to the cytoplasm. In terms of biological role, peptide chain release factor 2 directs the termination of translation in response to the peptide chain termination codons UGA and UAA. This Rhodococcus erythropolis (strain PR4 / NBRC 100887) protein is Peptide chain release factor 2.